We begin with the raw amino-acid sequence, 314 residues long: PDCD10 and GCKIII kinases-associated protein 1 (314 aa).

Residue Ser-30 is modified to Phosphoserine. A disordered region spans residues Asp-36–Thr-142. Phosphothreonine is present on Thr-106. Over residues Pro-107–Thr-116 the composition is skewed to polar residues. Phosphoserine is present on residues Ser-238 and Ser-241. Residues Val-267–Asp-291 form a disordered region. Residues Asn-271 to Asp-280 show a composition bias toward basic and acidic residues. Acidic residues predominate over residues Gly-281–Asp-291.

As to quaternary structure, interacts with KEAP1; this interaction prevents the ubiquitination of KEAP1 by TRIM25, thus protecting KEAP1 from degradation. Found in association with PDCD10 and members of the STE20 kinases, such as STK24, STK25 and STK26.

The protein localises to the cell membrane. Acts as a tumor suppressor. Acts as a tumor suppressor for colorectal cancer cell proliferation by targeting KEAP1/USP17/ELK1/CDK6 axis. This is PDCD10 and GCKIII kinases-associated protein 1 from Homo sapiens (Human).